The following is a 451-amino-acid chain: 2,4-dinitrotoluene dioxygenase system, large oxygenase component (451 aa).

In terms of domain architecture, Rieske spans 42 to 126 (WLFLTHDSLI…LQSVPFEKEL (85 aa)). 4 residues coordinate [2Fe-2S] cluster: Cys84, His86, Cys104, and His107. The Fe cation site is built by His211, His216, and Asp365.

This sequence belongs to the bacterial ring-hydroxylating dioxygenase alpha subunit family. In terms of assembly, the 2,4-dinitrotoluene dioxygenase (DNTDO) multicomponent enzyme system is composed of an electron transfer component and a dioxygenase component (iron sulfur protein (ISP)). The electron transfer component is composed of a ferredoxin reductase (DntAa) and a ferredoxin (DntAb), and the dioxygenase component is formed of a large alpha subunit (DntAc) and a small beta subunit (DntAd). [2Fe-2S] cluster serves as cofactor. Requires Fe(2+) as cofactor.

It catalyses the reaction 2,4-dinitrotoluene + NADH + O2 = 4-methyl-5-nitrocatechol + nitrite + NAD(+). Its function is as follows. Component of the 2,4-dinitrotoluene dioxygenase (DNTDO) multicomponent enzyme system which catalyzes the incorporation of both atoms of molecular oxygen into 2,4-dinitrotoluene (DNT) to form 4-methyl-5-nitrocatechol (MNC) and nitrite. The alpha subunit has a catalytic role in the holoenzyme. Also able to convert naphthalene to cis-(1R,2S)-dihydroxy-1,2-dihydronaphthalene. This chain is 2,4-dinitrotoluene dioxygenase system, large oxygenase component, found in Burkholderia sp. (strain RASC).